We begin with the raw amino-acid sequence, 192 residues long: Probable apo-citrate lyase phosphoribosyl-dephospho-CoA transferase (192 aa).

This sequence belongs to the CitX family.

The catalysed reaction is apo-[citrate lyase ACP] + 2'-(5''-triphospho-alpha-D-ribosyl)-3'-dephospho-CoA = holo-[citrate lyase ACP] + diphosphate. Functionally, transfers 2-(5''-triphosphoribosyl)-3'-dephosphocoenzyme-A on a serine residue to the apo-acyl carrier protein (gamma chain) of the citrate lyase to yield holo-acyl carrier protein. This chain is Probable apo-citrate lyase phosphoribosyl-dephospho-CoA transferase, found in Streptococcus pyogenes serotype M6 (strain ATCC BAA-946 / MGAS10394).